Consider the following 256-residue polypeptide: Na(+)-translocating NADH-quinone reductase subunit C (256 aa).

The chain crosses the membrane as a helical span at residues 12 to 32 (LGVVIGLSLVCSIIVSTAAVG). FMN phosphoryl threonine is present on T224.

This sequence belongs to the NqrC family. Composed of six subunits; NqrA, NqrB, NqrC, NqrD, NqrE and NqrF. FMN serves as cofactor.

It localises to the cell inner membrane. It carries out the reaction a ubiquinone + n Na(+)(in) + NADH + H(+) = a ubiquinol + n Na(+)(out) + NAD(+). This reaction is tightly coupled to the Na(+) pumping activity and specifically requires Na(+) for activity. Inhibited by korormicin and 2-N-heptyl-4-hydroxyquinoline N-oxide (HQNO). In terms of biological role, NQR complex catalyzes the reduction of ubiquinone-1 to ubiquinol by two successive reactions, coupled with the transport of Na(+) ions from the cytoplasm to the periplasm. NqrA to NqrE are probably involved in the second step, the conversion of ubisemiquinone to ubiquinol. This chain is Na(+)-translocating NADH-quinone reductase subunit C, found in Vibrio alginolyticus.